The primary structure comprises 428 residues: Phosphomethylpyrimidine synthase 2 (428 aa).

Substrate-binding positions include Asn65, Met94, Tyr123, His158, 180–182 (SRG), 221–224 (DGMR), and Glu260. Residue His264 participates in Zn(2+) binding. Tyr287 provides a ligand contact to substrate. Zn(2+) is bound at residue His328. Positions 405, 408, and 412 each coordinate [4Fe-4S] cluster.

The protein belongs to the ThiC family. [4Fe-4S] cluster serves as cofactor.

The catalysed reaction is 5-amino-1-(5-phospho-beta-D-ribosyl)imidazole + S-adenosyl-L-methionine = 4-amino-2-methyl-5-(phosphooxymethyl)pyrimidine + CO + 5'-deoxyadenosine + formate + L-methionine + 3 H(+). It participates in cofactor biosynthesis; thiamine diphosphate biosynthesis. Its function is as follows. Catalyzes the synthesis of the hydroxymethylpyrimidine phosphate (HMP-P) moiety of thiamine from aminoimidazole ribotide (AIR) in a radical S-adenosyl-L-methionine (SAM)-dependent reaction. The protein is Phosphomethylpyrimidine synthase 2 of Methanosarcina barkeri (strain Fusaro / DSM 804).